The following is a 470-amino-acid chain: Isocitrate dehydrogenase (NAD(+)), mitochondrial (470 aa).

The transit peptide at 1 to 26 (MTRVERGRVLARAIERAVAHRASARR) directs the protein to the mitochondrion. Residues 138 to 140 (TVT) and Asn-159 each bind NAD(+). D-threo-isocitrate-binding positions include 157–163 (SPNGAMR), Arg-193, Tyr-200, Lys-275, and Asp-319. Asp-319 is a binding site for Mg(2+). Position 324 (Lys-324) interacts with NAD(+). Residue Asp-343 participates in D-threo-isocitrate binding. Asp-343 and Asp-347 together coordinate Mg(2+). NAD(+) is bound by residues 380 to 385 (HGTVAD) and Asn-399.

This sequence belongs to the isocitrate and isopropylmalate dehydrogenases family. In terms of assembly, forms homodimers. Requires Mg(2+) as cofactor. Mn(2+) is required as a cofactor.

The protein resides in the mitochondrion. The enzyme catalyses D-threo-isocitrate + NAD(+) = 2-oxoglutarate + CO2 + NADH. The homodimer exhibits allosteric regulation by isocitrate. In terms of biological role, performs an essential role in the oxidative function of the tricarboxylic acid cycle and respiration. Catalyzes the decarboxylation of isocitrate to produce 2-oxoglutarate and generate NADH to provide electrons for energy production. This is Isocitrate dehydrogenase (NAD(+)), mitochondrial from Ostreococcus tauri.